We begin with the raw amino-acid sequence, 378 residues long: MFSNSKKKIFLYVLIAGVATFSFAFLVLNRLQAEEHSLAYVENLFLDPFIKQNESLAHANDRPFKLYLGIFSQAKNVDRRNFLRTDYNEYIKEFAVNDTVDVRFILGLPENEQELATIREEQRTYGDLAVLPIPENVDAGKSIVYFQTFLEGYQPFPLFSELADNLIMPSTQFHGSFIYNQSIKTYELPGMKEFQDLGEPKHDYDFIVKADDDSFLNLPRLFEMLKEHVGKSRFYFGRDCTRRELPTAVRDFPYMCGFFYIVSPDMAYEVAKRRNIIIPFEDAQTGYSIYLSGNVKNAEFSKCTLYDLILPNEGFNYRQSYLRIDAIAVHKLKSIPLLSTVSNWFKKMYEHRANCSALIETERLSCLQATIPLPSLDV.

Topologically, residues 1–8 are cytoplasmic; the sequence is MFSNSKKK. A helical; Signal-anchor for type II membrane protein membrane pass occupies residues 9-29; the sequence is IFLYVLIAGVATFSFAFLVLN. At 30 to 378 the chain is on the lumenal side; that stretch reads RLQAEEHSLA…ATIPLPSLDV (349 aa). N-linked (GlcNAc...) asparagine glycosylation is found at N53, N97, N180, and N354.

It belongs to the glycosyltransferase 31 family.

The protein localises to the endoplasmic reticulum membrane. The protein resides in the golgi apparatus. It is found in the golgi stack membrane. The enzyme catalyses 3-O-(beta-D-galactosyl-(1-&gt;4)-beta-D-xylosyl)-L-seryl-[protein] + UDP-alpha-D-galactose = 3-O-(beta-D-galactosyl-(1-&gt;3)-beta-D-galactosyl-(1-&gt;4)-beta-D-xylosyl)-L-seryl-[protein] + UDP + H(+). Involved in cell wall biogenesis. Has a role in the addition of Gal-beta1,3 moeities to galactomannans and their subsequent pyruvylation. Has a role in meiosis. The sequence is that of Beta-1,3-galactosyltransferase pvg3 (pvg3) from Schizosaccharomyces pombe (strain 972 / ATCC 24843) (Fission yeast).